The primary structure comprises 602 residues: Fumarate reductase flavoprotein subunit (602 aa).

FAD is bound by residues Gly12–Ala16, Ile36–Lys38, Ser44–Gly52, His156–Val158, Ala192–Thr193, and Asp212. Position 45 is a tele-8alpha-FAD histidine (His45). Catalysis depends on residues His233 and Arg249. FAD-binding positions include His356 to Tyr357, Glu380, and Arg391 to Leu397. The disordered stretch occupies residues Tyr581–Gly602. The span at Ala587–Gly602 shows a compositional bias: basic and acidic residues.

Belongs to the FAD-dependent oxidoreductase 2 family. FRD/SDH subfamily. As to quaternary structure, part of an enzyme complex containing four subunits: a flavoprotein (FrdA), an iron-sulfur protein (FrdB), and two hydrophobic anchor proteins (FrdC and FrdD). Can be cross-linked to SdhE. Purified from membrane fractions associated with protoporphyrinogen IX dehydrogenase (hemG). FAD is required as a cofactor.

The protein localises to the cell inner membrane. The enzyme catalyses a quinone + succinate = fumarate + a quinol. It carries out the reaction a menaquinone + succinate = a menaquinol + fumarate. Its activity is regulated as follows. Inhibited by oxaloacetate, a substrate analog. Functionally, two distinct, membrane-bound, FAD-containing enzymes are responsible for the catalysis of fumarate and succinate interconversion; fumarate reductase is used during anaerobic growth, and succinate dehydrogenase is used during aerobic growth. The QFR enzyme complex binds 2 quinones in or near the membrane; 1 near the [3Fe-4S] cluster (QP is proximal to the [3Fe-4S] cluster, on the cytoplasmic side of the membrane) while QD (the distal cluster) is on the other side of the membrane. It is not clear if both of the quinol-binding sites are functionally relevant. The chain is Fumarate reductase flavoprotein subunit (frdA) from Escherichia coli (strain K12).